Here is a 335-residue protein sequence, read N- to C-terminus: Pyridoxal 5'-phosphate synthase subunit PdxS (335 aa).

Aspartate 30 lines the D-ribose 5-phosphate pocket. The active-site Schiff-base intermediate with D-ribose 5-phosphate is lysine 87. Residue glycine 159 participates in D-ribose 5-phosphate binding. Arginine 171 is a binding site for D-glyceraldehyde 3-phosphate. D-ribose 5-phosphate contacts are provided by residues glycine 257 and 278–279 (GS).

It belongs to the PdxS/SNZ family. As to quaternary structure, in the presence of PdxT, forms a dodecamer of heterodimers.

The enzyme catalyses aldehydo-D-ribose 5-phosphate + D-glyceraldehyde 3-phosphate + L-glutamine = pyridoxal 5'-phosphate + L-glutamate + phosphate + 3 H2O + H(+). The protein operates within cofactor biosynthesis; pyridoxal 5'-phosphate biosynthesis. Its function is as follows. Catalyzes the formation of pyridoxal 5'-phosphate from ribose 5-phosphate (RBP), glyceraldehyde 3-phosphate (G3P) and ammonia. The ammonia is provided by the PdxT subunit. Can also use ribulose 5-phosphate and dihydroxyacetone phosphate as substrates, resulting from enzyme-catalyzed isomerization of RBP and G3P, respectively. The sequence is that of Pyridoxal 5'-phosphate synthase subunit PdxS from Thermococcus gammatolerans (strain DSM 15229 / JCM 11827 / EJ3).